The following is a 353-amino-acid chain: Quinolinate synthase (353 aa).

Iminosuccinate contacts are provided by His-47 and Ser-68. Cys-113 serves as a coordination point for [4Fe-4S] cluster. Iminosuccinate is bound by residues 139-141 and Ser-156; that span reads YAN. Residue Cys-200 coordinates [4Fe-4S] cluster. Iminosuccinate-binding positions include 226 to 228 and Thr-243; that span reads HPE. Cys-297 lines the [4Fe-4S] cluster pocket.

This sequence belongs to the quinolinate synthase family. Type 1 subfamily. The cofactor is [4Fe-4S] cluster.

The protein resides in the cytoplasm. The catalysed reaction is iminosuccinate + dihydroxyacetone phosphate = quinolinate + phosphate + 2 H2O + H(+). It functions in the pathway cofactor biosynthesis; NAD(+) biosynthesis; quinolinate from iminoaspartate: step 1/1. Its function is as follows. Catalyzes the condensation of iminoaspartate with dihydroxyacetone phosphate to form quinolinate. The protein is Quinolinate synthase of Yersinia pestis bv. Antiqua (strain Nepal516).